Consider the following 495-residue polypeptide: MNAGQLPPELQRVHMVGIGGSGMSGIARILLDRGGLVSGSDAKESRVVHALRARGALIRIGHDASLLDLLPGGATAVITIRTAIPKTNPELVEARRRGIPVLLRSAVLARLMDGCTTLMVAGTHGKTTTTSMLVVALQHCGCDPSFVVGGELAVVGTNAHHGLGACFVAEADESDGSLLEYTPNVAVVTNIDSDHLDFYGSVDAYIRVFDSFVERFALGGALVVCNDDPGAAALARRTAELGIRVLRYGSDDRIGETLAARLLSWEQQGTGAVAHIQLAGQPNSRVMRLPVPGRHMALNALGALLAAIEIGASTDEVLDGLAGFRGVRRRFELVGTSGVGQASNSLVRVFDDYAHHPTEISATLAAFRIMLEQSGGGRCIVVFQPHLYSRTKALSREFGRALSAADEVFIVGVNGAREQPLAGVSGASVAKHVSVPVRYIPDYSAVVIEVAAAAGPGDVIVTMGIGDVGLLGPEIVAALRVRANCNTPGCSGVLQ.

Position 122–128 (122–128 (GTHGKTT)) interacts with ATP.

The protein belongs to the MurCDEF family.

It is found in the cytoplasm. It carries out the reaction UDP-N-acetyl-alpha-D-muramate + L-alanine + ATP = UDP-N-acetyl-alpha-D-muramoyl-L-alanine + ADP + phosphate + H(+). It participates in cell wall biogenesis; peptidoglycan biosynthesis. Its function is as follows. Cell wall formation. The protein is UDP-N-acetylmuramate--L-alanine ligase of Mycobacterium leprae (strain TN).